A 354-amino-acid polypeptide reads, in one-letter code: Elongation factor Ts (354 aa).

The tract at residues 81 to 84 (TDFV) is involved in Mg(2+) ion dislocation from EF-Tu.

The protein belongs to the EF-Ts family.

The protein resides in the cytoplasm. Functionally, associates with the EF-Tu.GDP complex and induces the exchange of GDP to GTP. It remains bound to the aminoacyl-tRNA.EF-Tu.GTP complex up to the GTP hydrolysis stage on the ribosome. The polypeptide is Elongation factor Ts (Campylobacter fetus subsp. fetus (strain 82-40)).